A 172-amino-acid chain; its full sequence is RNA pyrophosphohydrolase (172 aa).

In terms of domain architecture, Nudix hydrolase spans glycine 6–lysine 149. Positions glycine 38–glycine 59 match the Nudix box motif.

It belongs to the Nudix hydrolase family. RppH subfamily. Requires a divalent metal cation as cofactor.

Accelerates the degradation of transcripts by removing pyrophosphate from the 5'-end of triphosphorylated RNA, leading to a more labile monophosphorylated state that can stimulate subsequent ribonuclease cleavage. The polypeptide is RNA pyrophosphohydrolase (Shewanella frigidimarina (strain NCIMB 400)).